A 305-amino-acid chain; its full sequence is Homoserine O-acetyltransferase (305 aa).

The Acyl-thioester intermediate role is filled by C142. Substrate contacts are provided by K163 and S192. H235 acts as the Proton acceptor in catalysis. E237 is an active-site residue. A substrate-binding site is contributed by R249.

This sequence belongs to the MetA family.

It localises to the cytoplasm. The enzyme catalyses L-homoserine + acetyl-CoA = O-acetyl-L-homoserine + CoA. It participates in amino-acid biosynthesis; L-methionine biosynthesis via de novo pathway; O-acetyl-L-homoserine from L-homoserine: step 1/1. Functionally, transfers an acetyl group from acetyl-CoA to L-homoserine, forming acetyl-L-homoserine. This chain is Homoserine O-acetyltransferase, found in Cereibacter sphaeroides (strain KD131 / KCTC 12085) (Rhodobacter sphaeroides).